Consider the following 172-residue polypeptide: General stress protein 18 (172 aa).

The PfpI endopeptidase domain occupies 3–171 (KKIAVVLTYY…FNRESLALLE (169 aa)). Cysteine 104 functions as the Nucleophile in the catalytic mechanism. The active site involves histidine 105.

The protein belongs to the peptidase C56 family.

Functions in the protection against aldehyde-stress, possibly by degrading damaged proteins. The polypeptide is General stress protein 18 (yfkM) (Bacillus subtilis (strain 168)).